A 141-amino-acid polypeptide reads, in one-letter code: Nucleoside diphosphate kinase (141 aa).

6 residues coordinate ATP: Lys11, Phe59, Arg87, Thr93, Arg104, and Asn114. Catalysis depends on His117, which acts as the Pros-phosphohistidine intermediate.

The protein belongs to the NDK family. As to quaternary structure, homotetramer. The cofactor is Mg(2+).

The protein localises to the cytoplasm. The catalysed reaction is a 2'-deoxyribonucleoside 5'-diphosphate + ATP = a 2'-deoxyribonucleoside 5'-triphosphate + ADP. It carries out the reaction a ribonucleoside 5'-diphosphate + ATP = a ribonucleoside 5'-triphosphate + ADP. Functionally, major role in the synthesis of nucleoside triphosphates other than ATP. The ATP gamma phosphate is transferred to the NDP beta phosphate via a ping-pong mechanism, using a phosphorylated active-site intermediate. This Proteus mirabilis (strain HI4320) protein is Nucleoside diphosphate kinase.